The chain runs to 128 residues: Histone H2A type 1-H (128 aa).

The disordered stretch occupies residues 1-22 (MSGRGKQGGKARAKAKTRSSRA). Ser2 is subject to N-acetylserine. Ser2 carries the post-translational modification Phosphoserine; by RPS6KA5. Arg4 carries the post-translational modification Citrulline; alternate. Arg4 carries the symmetric dimethylarginine; by PRMT5; alternate modification. N6-(2-hydroxyisobutyryl)lysine; alternate occurs at positions 6 and 10. The residue at position 6 (Lys6) is an N6-(beta-hydroxybutyryl)lysine; alternate. Over residues 7-19 (QGGKARAKAKTRS) the composition is skewed to basic residues. At Lys10 the chain carries N6-lactoyllysine; alternate. Position 10 is an N6-succinyllysine; alternate (Lys10). Residues Lys14 and Lys16 each participate in a glycyl lysine isopeptide (Lys-Gly) (interchain with G-Cter in ubiquitin) cross-link. Residue Lys37 is modified to N6-(2-hydroxyisobutyryl)lysine; alternate. Lys37 is subject to N6-(beta-hydroxybutyryl)lysine; alternate. Position 37 is an N6-crotonyllysine; alternate (Lys37). N6-(2-hydroxyisobutyryl)lysine is present on residues Lys75 and Lys76. Residue Lys96 is modified to N6-(2-hydroxyisobutyryl)lysine; alternate. Lys96 is modified (N6-succinyllysine; alternate). Lys96 is subject to N6-glutaryllysine; alternate. N5-methylglutamine is present on Gln105. Position 119 is an N6-(2-hydroxyisobutyryl)lysine; alternate (Lys119). N6-crotonyllysine; alternate is present on residues Lys119 and Lys120. An N6-glutaryllysine; alternate mark is found at Lys119 and Lys120. Lys120 is modified (N6-(beta-hydroxybutyryl)lysine; alternate). A Glycyl lysine isopeptide (Lys-Gly) (interchain with G-Cter in ubiquitin); alternate cross-link involves residue Lys120. The residue at position 121 (Thr121) is a Phosphothreonine; by DCAF1. Residue Lys126 is modified to N6-(beta-hydroxybutyryl)lysine; alternate. Residue Lys126 is modified to N6-crotonyllysine; alternate. Lys126 is subject to N6-glutaryllysine; alternate.

This sequence belongs to the histone H2A family. As to quaternary structure, the nucleosome is a histone octamer containing two molecules each of H2A, H2B, H3 and H4 assembled in one H3-H4 heterotetramer and two H2A-H2B heterodimers. The octamer wraps approximately 147 bp of DNA. Post-translationally, deiminated on Arg-4 in granulocytes upon calcium entry. In terms of processing, monoubiquitination of Lys-120 (H2AK119Ub) by RING1, TRIM37 and RNF2/RING2 complex gives a specific tag for epigenetic transcriptional repression and participates in X chromosome inactivation of female mammals. It is involved in the initiation of both imprinted and random X inactivation. Ubiquitinated H2A is enriched in inactive X chromosome chromatin. Ubiquitination of H2A functions downstream of methylation of 'Lys-27' of histone H3 (H3K27me). H2AK119Ub by RNF2/RING2 can also be induced by ultraviolet and may be involved in DNA repair. Following DNA double-strand breaks (DSBs), it is ubiquitinated through 'Lys-63' linkage of ubiquitin moieties by the E2 ligase UBE2N and the E3 ligases RNF8 and RNF168, leading to the recruitment of repair proteins to sites of DNA damage. Ubiquitination at Lys-14 and Lys-16 (H2AK13Ub and H2AK15Ub, respectively) in response to DNA damage is initiated by RNF168 that mediates monoubiquitination at these 2 sites, and 'Lys-63'-linked ubiquitin are then conjugated to monoubiquitin; RNF8 is able to extend 'Lys-63'-linked ubiquitin chains in vitro. H2AK119Ub and ionizing radiation-induced 'Lys-63'-linked ubiquitination (H2AK13Ub and H2AK15Ub) are distinct events. Phosphorylation on Ser-2 (H2AS1ph) is enhanced during mitosis. Phosphorylation on Ser-2 by RPS6KA5/MSK1 directly represses transcription. Acetylation of H3 inhibits Ser-2 phosphorylation by RPS6KA5/MSK1. Phosphorylation at Thr-121 (H2AT120ph) by DCAF1 is present in the regulatory region of many tumor suppresor genes and down-regulates their transcription. Post-translationally, symmetric dimethylation on Arg-4 by the PRDM1/PRMT5 complex may play a crucial role in the germ-cell lineage. In terms of processing, glutamine methylation at Gln-105 (H2AQ104me) by FBL is specifically dedicated to polymerase I. It is present at 35S ribosomal DNA locus and impairs binding of the FACT complex. Crotonylation (Kcr) is specifically present in male germ cells and marks testis-specific genes in post-meiotic cells, including X-linked genes that escape sex chromosome inactivation in haploid cells. Crotonylation marks active promoters and enhancers and confers resistance to transcriptional repressors. It is also associated with post-meiotically activated genes on autosomes. Post-translationally, hydroxybutyrylation of histones is induced by starvation. In terms of processing, lactylated in macrophages by EP300/P300 by using lactoyl-CoA directly derived from endogenous or exogenous lactate, leading to stimulates gene transcription.

Its subcellular location is the nucleus. It is found in the chromosome. Core component of nucleosome. Nucleosomes wrap and compact DNA into chromatin, limiting DNA accessibility to the cellular machineries which require DNA as a template. Histones thereby play a central role in transcription regulation, DNA repair, DNA replication and chromosomal stability. DNA accessibility is regulated via a complex set of post-translational modifications of histones, also called histone code, and nucleosome remodeling. The chain is Histone H2A type 1-H from Mus musculus (Mouse).